The chain runs to 454 residues: Protein odr-4 homolog (454 aa).

The next 2 membrane-spanning stretches (helical) occupy residues 82–102 and 432–452; these read MLPG…ELAN and IGVI…FHYF.

The protein belongs to the ODR-4 family.

Its subcellular location is the membrane. May play a role in the trafficking of a subset of G-protein coupled receptors. This Pongo abelii (Sumatran orangutan) protein is Protein odr-4 homolog (ODR4).